Consider the following 66-residue polypeptide: MAKGKDARVSVILECTSCVRKNVNKESRGISRYITQKNRRNTPSRLELRKFCPYCYKHTIHGEIKK.

This sequence belongs to the bacterial ribosomal protein bL33 family.

The protein localises to the plastid. It is found in the chloroplast. This is Large ribosomal subunit protein bL33c from Fagopyrum esculentum subsp. ancestrale (Wild buckwheat).